The following is a 134-amino-acid chain: UPF0102 protein Adeh_1910 (134 aa).

The protein belongs to the UPF0102 family.

This chain is UPF0102 protein Adeh_1910, found in Anaeromyxobacter dehalogenans (strain 2CP-C).